The sequence spans 285 residues: Phospholipid phosphatase 1 (285 aa).

At 1–6 the chain is on the cytoplasmic side; it reads MFDKTR. Residues 5–7 carry the PDZ-binding; involved in localization to the apical cell membrane motif; sequence TRL. A helical transmembrane segment spans residues 7 to 27; the sequence is LPYVALDVLCVLLAGLPFAIL. The Extracellular segment spans residues 28–53; that stretch reads TSRHTPFQRGLFCNDESIKYPYKEDT. Residues 54–74 form a helical membrane-spanning segment; the sequence is IPYPLLGGIIIPFSIIVMIVG. Over 75–94 the chain is Cytoplasmic; sequence ETLSVYFNLLHSNSFIRNNY. Residues 95–115 traverse the membrane as a helical segment; sequence IATIYKAIGTFLFGAAASQSL. Topologically, residues 116–164 are extracellular; it reads TDIAKYSIGRLRPHFLDVCDPDWSKINCSDGYIENYICRGNAQKVKEGR. Residues 120 to 128 are phosphatase sequence motif I; sequence KYSIGRLRP. Residue asparagine 142 is glycosylated (N-linked (GlcNAc...) asparagine). A helical membrane pass occupies residues 165-185; sequence LSFYSGHSSFSMYCMLFVALY. The phosphatase sequence motif II stretch occupies residues 168 to 171; that stretch reads YSGH. The active-site Proton donors is the histidine 171. Over 186-196 the chain is Cytoplasmic; that stretch reads LQARMKGDWAR. The chain crosses the membrane as a helical span at residues 197 to 216; that stretch reads LLRPTLQFGLVAVSIYVGLS. A phosphatase sequence motif III region spans residues 216–227; that stretch reads SRVSDYKHHWSD. Residues 217–229 lie on the Extracellular side of the membrane; that stretch reads RVSDYKHHWSDVL. Histidine 223 functions as the Nucleophile in the catalytic mechanism. Residues 230-250 traverse the membrane as a helical segment; sequence TGLIQGALVAIVVAVYVSDFF. The Cytoplasmic portion of the chain corresponds to 251 to 285; that stretch reads KERNSPFKERKEEDSHTTLHETPTTGNHYRNSHQP. Over residues 257–269 the composition is skewed to basic and acidic residues; that stretch reads FKERKEEDSHTTL. Residues 257–285 are disordered; the sequence is FKERKEEDSHTTLHETPTTGNHYRNSHQP. Residues 270–285 show a composition bias toward polar residues; the sequence is HETPTTGNHYRNSHQP.

It belongs to the PA-phosphatase related phosphoesterase family. As to quaternary structure, forms functional homodimers and homooligomers that are not required for substrate recognition and catalytic activity. Can also form heterooligomers with PLPP2 and PLPP3. Post-translationally, N-glycosylated. N-linked sugars are of the complex type. N-glycosylation is not required for the phosphatase activity.

It localises to the cell membrane. The protein localises to the apical cell membrane. Its subcellular location is the membrane raft. It is found in the membrane. The protein resides in the caveola. It carries out the reaction a 1,2-diacyl-sn-glycero-3-phosphate + H2O = a 1,2-diacyl-sn-glycerol + phosphate. The enzyme catalyses 1,2-dihexadecanoyl-sn-glycero-3-phosphate + H2O = 1,2-dihexadecanoyl-sn-glycerol + phosphate. The catalysed reaction is 1,2-di-(9Z-octadecenoyl)-sn-glycero-3-phosphate + H2O = 1,2-di-(9Z-octadecenoyl)-sn-glycerol + phosphate. It catalyses the reaction a monoacyl-sn-glycero-3-phosphate + H2O = a monoacylglycerol + phosphate. It carries out the reaction (9Z)-octadecenoyl-sn-glycero-3-phosphate + H2O = (9Z-octadecenoyl)-glycerol + phosphate. The enzyme catalyses a 1-acyl-sn-glycero-3-phosphate + H2O = a 1-acyl-sn-glycerol + phosphate. The catalysed reaction is 1-(9Z-octadecenoyl)-sn-glycero-3-phosphate + H2O = 1-(9Z-octadecenoyl)-sn-glycerol + phosphate. It catalyses the reaction a 1,2-diacyl-sn-glycerol 3-diphosphate + H2O = a 1,2-diacyl-sn-glycero-3-phosphate + phosphate + H(+). It carries out the reaction sphing-4-enine 1-phosphate + H2O = sphing-4-enine + phosphate. The enzyme catalyses an N-acylsphing-4-enine 1-phosphate + H2O = an N-acylsphing-4-enine + phosphate. The catalysed reaction is N-(octanoyl)-sphing-4-enine-1-phosphate + H2O = N-octanoylsphing-4-enine + phosphate. It catalyses the reaction N-(9Z-octadecenoyl)-ethanolamine phosphate + H2O = N-(9Z-octadecenoyl) ethanolamine + phosphate. It carries out the reaction 1-hexadecanoyl-2-(9Z-octadecenoyl)-sn-glycero-3-phosphate + H2O = 1-hexadecanoyl-2-(9Z-octadecenoyl)-sn-glycerol + phosphate. The protein operates within lipid metabolism; phospholipid metabolism. With respect to regulation, magnesium-independent phospholipid phosphatase. Insensitive to N-ethylmaleimide. Its function is as follows. Magnesium-independent phospholipid phosphatase of the plasma membrane that catalyzes the dephosphorylation of a variety of glycerolipid and sphingolipid phosphate esters including phosphatidate/PA, lysophosphatidate/LPA, diacylglycerol pyrophosphate/DGPP, sphingosine 1-phosphate/S1P and ceramide 1-phosphate/C1P. Also acts on N-oleoyl ethanolamine phosphate/N-(9Z-octadecenoyl)-ethanolamine phosphate, a potential physiological compound. Through its extracellular phosphatase activity allows both the hydrolysis and the cellular uptake of these bioactive lipid mediators from the milieu, regulating signal transduction in different cellular processes. It is for instance essential for the extracellular hydrolysis of S1P and subsequent conversion into intracellular S1P. Involved in the regulation of inflammation, platelets activation, cell proliferation and migration among other processes. May also have an intracellular activity to regulate phospholipid-mediated signaling pathways. This chain is Phospholipid phosphatase 1, found in Sus scrofa (Pig).